Consider the following 225-residue polypeptide: Vacuolar protein sorting-associated protein 2 homolog 1 (225 aa).

Residues 13–54 (AELLRENKRMLDKSIREIERERQGLQTQEKKLINEIKKTAKQ) adopt a coiled-coil conformation.

This sequence belongs to the SNF7 family. Component of the endosomal sorting required for transport complex III (ESCRT-III), composed at least of VPS2, VPS20, VPS24 and VPS32. Interacts with SKD1.

The protein localises to the endosome. Its function is as follows. Component of the ESCRT-III complex, which is required for multivesicular bodies (MVBs) formation and sorting of endosomal cargo proteins into MVBs. The ESCRT-III complex is probably involved in the concentration of MVB cargo. This Arabidopsis thaliana (Mouse-ear cress) protein is Vacuolar protein sorting-associated protein 2 homolog 1 (VPS2.1).